The primary structure comprises 414 residues: Gamma-glutamyl phosphate reductase (414 aa).

The protein belongs to the gamma-glutamyl phosphate reductase family.

The protein resides in the cytoplasm. The catalysed reaction is L-glutamate 5-semialdehyde + phosphate + NADP(+) = L-glutamyl 5-phosphate + NADPH + H(+). Its pathway is amino-acid biosynthesis; L-proline biosynthesis; L-glutamate 5-semialdehyde from L-glutamate: step 2/2. In terms of biological role, catalyzes the NADPH-dependent reduction of L-glutamate 5-phosphate into L-glutamate 5-semialdehyde and phosphate. The product spontaneously undergoes cyclization to form 1-pyrroline-5-carboxylate. The polypeptide is Gamma-glutamyl phosphate reductase (Thermoanaerobacter pseudethanolicus (strain ATCC 33223 / 39E) (Clostridium thermohydrosulfuricum)).